A 399-amino-acid chain; its full sequence is Acetate kinase (399 aa).

A Mg(2+)-binding site is contributed by asparagine 8. Lysine 15 lines the ATP pocket. Residue arginine 89 coordinates substrate. The active-site Proton donor/acceptor is the aspartate 146. Residues 206-210 (HVGNG), 283-285 (DMR), and 331-335 (GMGEN) each bind ATP. Mg(2+) is bound at residue glutamate 383.

This sequence belongs to the acetokinase family. Homodimer. It depends on Mg(2+) as a cofactor. Mn(2+) is required as a cofactor.

Its subcellular location is the cytoplasm. It catalyses the reaction acetate + ATP = acetyl phosphate + ADP. It participates in metabolic intermediate biosynthesis; acetyl-CoA biosynthesis; acetyl-CoA from acetate: step 1/2. Catalyzes the formation of acetyl phosphate from acetate and ATP. Can also catalyze the reverse reaction. In Streptococcus equi subsp. zooepidemicus (strain H70), this protein is Acetate kinase.